Reading from the N-terminus, the 711-residue chain is Zinc finger protein 175 (711 aa).

Residues 1–11 are compositionally biased toward polar residues; sequence MPADVNLSQKP. The segment at 1-21 is disordered; the sequence is MPADVNLSQKPQVLGPEKQDG. The 72-residue stretch at 27–98 folds into the KRAB domain; it reads VSFEDVTVDF…EAEVSHQRCQ (72 aa). The C2H2-type 1; atypical zinc-finger motif lies at 279 to 301; the sequence is DGCSECGGSFTQKSHLFAQQRIH. A C2H2-type 2; atypical zinc finger spans residues 307–329; that stretch reads HECGKCGKAFMPQLKLSVYLTDH. Residues 335-357 form a C2H2-type 3 zinc finger; that stretch reads CICKECGKVFIQRSELLTHQKTH. The Nuclear localization signal motif lies at 359 to 362; it reads RKKP. C2H2-type zinc fingers lie at residues 363 to 385, 391 to 413, 419 to 441, 447 to 469, 475 to 497, 503 to 525, 531 to 553, 559 to 581, 587 to 609, 615 to 637, 643 to 665, and 671 to 693; these read YKCHDCGKAFFQMLSLFRHQRTH, YECSECGKGFSQNSTLIIHQKIH, YACSECGKAFTQKSTLSLHQRIH, YVCIECGQAFIQKAHLIVHQRSH, YQCHNCGKSFISKSQLDIHHRIH, YECSDCGKTFTQKSHLNIHQKIH, HVCSECGKAFNQKSILSMHQRIH, YKCSECGKAFTSKSQFKEHQRIH, YVCTECGKAFNGRSNFHKHQITH, FVCYKCGKAFVQKSELITHQRTH, YECLDCGKSFSKKPQLKVHQRIH, and YVCSECGKAFNNRSNFNKHQTTH.

It belongs to the krueppel C2H2-type zinc-finger protein family. In terms of tissue distribution, ubiquitous.

The protein localises to the cytoplasm. Its subcellular location is the nucleus. Down-regulates the expression of several chemokine receptors. Interferes with HIV-1 replication by suppressing Tat-induced viral LTR promoter activity. The polypeptide is Zinc finger protein 175 (ZNF175) (Homo sapiens (Human)).